Consider the following 721-residue polypeptide: Pentatricopeptide repeat-containing protein At3g49710 (721 aa).

14 PPR repeats span residues 42–72 (STYLSNHFVNLYSKCGRLSYARAAFYSTEEP), 73–103 (NVFSYNVIVKAYAKDSKIHIARQLFDEIPQP), 104–138 (DTVSYNTLISGYADARETFAAMVLFKRMRKLGFEV), 139–169 (DGFTLSGLIAACCDRVDLIKQLHCFSVSGGF), 172–202 (YSSVNNAFVTYYSKGGLLREAVSVFYGMDEL), 204–238 (DEVSWNSMIVAYGQHKEGAKALALYKEMIFKGFKI), 239–273 (DMFTLASVLNALTSLDHLIGGRQFHGKLIKAGFHQ), 274–307 (NSHVGSGLIDFYSKCGGCDGMYDSEKVFQEILSP), 308–343 (DLVVWNTMISGYSMNEELSEEAVKSFRQMQRIGHRP), 344–378 (DDCSFVCVTSACSNLSSPSQCKQIHGLAIKSHIPS), 380–410 (RISVNNALISLYYKSGNLQDARWVFDRMPEL), 411–445 (NAVSFNCMIKGYAQHGHGTEALLLYQRMLDSGIAP), 446–476 (NKITFVAVLSACAHCGKVDEGQEYFNTMKET), and 482–512 (EAEHYSCMIDLLGRAGKLEEAERFIDAMPYK). Positions 517–592 (AWAALLGACR…KPGCSWIEVK (76 aa)) are type E motif. Positions 593–623 (KKKHVFVAEDWSHPMIREVNEYLEEMMKKMK) are type E(+) motif. The segment at 624-721 (KVGYVMDKKW…DGKCSCGDYW (98 aa)) is type DYW motif.

It belongs to the PPR family. PCMP-H subfamily.

This is Pentatricopeptide repeat-containing protein At3g49710 (PCMP-H79) from Arabidopsis thaliana (Mouse-ear cress).